A 198-amino-acid polypeptide reads, in one-letter code: Holliday junction branch migration complex subunit RuvA (198 aa).

Residues 1–63 (MIALLTGQIA…EDAIQLYGFR (63 aa)) are domain I. The domain II stretch occupies residues 64-142 (TSLEKSFFQL…KLDLSSVVVP (79 aa)). The segment at 143–153 (EPRQMPEDDLL) is flexible linker. Residues 153 to 198 (LEDVVSALLNLGYKEPQVRKVLAGLNPGSDASLEGVLKQALKSLMR) are domain III.

Belongs to the RuvA family. As to quaternary structure, homotetramer. Forms an RuvA(8)-RuvB(12)-Holliday junction (HJ) complex. HJ DNA is sandwiched between 2 RuvA tetramers; dsDNA enters through RuvA and exits via RuvB. An RuvB hexamer assembles on each DNA strand where it exits the tetramer. Each RuvB hexamer is contacted by two RuvA subunits (via domain III) on 2 adjacent RuvB subunits; this complex drives branch migration. In the full resolvosome a probable DNA-RuvA(4)-RuvB(12)-RuvC(2) complex forms which resolves the HJ.

The protein localises to the cytoplasm. Functionally, the RuvA-RuvB-RuvC complex processes Holliday junction (HJ) DNA during genetic recombination and DNA repair, while the RuvA-RuvB complex plays an important role in the rescue of blocked DNA replication forks via replication fork reversal (RFR). RuvA specifically binds to HJ cruciform DNA, conferring on it an open structure. The RuvB hexamer acts as an ATP-dependent pump, pulling dsDNA into and through the RuvAB complex. HJ branch migration allows RuvC to scan DNA until it finds its consensus sequence, where it cleaves and resolves the cruciform DNA. This is Holliday junction branch migration complex subunit RuvA from Pelobacter propionicus (strain DSM 2379 / NBRC 103807 / OttBd1).